We begin with the raw amino-acid sequence, 592 residues long: V-type ATP synthase alpha chain (592 aa).

Position 232-239 (232-239) interacts with ATP; sequence GPFGSGKT.

It belongs to the ATPase alpha/beta chains family.

The enzyme catalyses ATP + H2O + 4 H(+)(in) = ADP + phosphate + 5 H(+)(out). In terms of biological role, produces ATP from ADP in the presence of a proton gradient across the membrane. The V-type alpha chain is a catalytic subunit. The protein is V-type ATP synthase alpha chain of Clostridioides difficile (strain 630) (Peptoclostridium difficile).